Reading from the N-terminus, the 94-residue chain is Aspartyl/glutamyl-tRNA(Asn/Gln) amidotransferase subunit C (94 aa).

The protein belongs to the GatC family. As to quaternary structure, heterotrimer of A, B and C subunits.

It carries out the reaction L-glutamyl-tRNA(Gln) + L-glutamine + ATP + H2O = L-glutaminyl-tRNA(Gln) + L-glutamate + ADP + phosphate + H(+). The catalysed reaction is L-aspartyl-tRNA(Asn) + L-glutamine + ATP + H2O = L-asparaginyl-tRNA(Asn) + L-glutamate + ADP + phosphate + 2 H(+). Allows the formation of correctly charged Asn-tRNA(Asn) or Gln-tRNA(Gln) through the transamidation of misacylated Asp-tRNA(Asn) or Glu-tRNA(Gln) in organisms which lack either or both of asparaginyl-tRNA or glutaminyl-tRNA synthetases. The reaction takes place in the presence of glutamine and ATP through an activated phospho-Asp-tRNA(Asn) or phospho-Glu-tRNA(Gln). This Nitratidesulfovibrio vulgaris (strain ATCC 29579 / DSM 644 / CCUG 34227 / NCIMB 8303 / VKM B-1760 / Hildenborough) (Desulfovibrio vulgaris) protein is Aspartyl/glutamyl-tRNA(Asn/Gln) amidotransferase subunit C.